The following is a 409-amino-acid chain: Sulfide-quinone reductase (409 aa).

Residues 8–12 (GGRFG), 34–35 (NK), and C129 contribute to the FAD site. C178 functions as the Cysteine persulfide intermediate in the catalytic mechanism. FAD contacts are provided by N271, D307, and G317. C350 functions as the Cysteine persulfide intermediate in the catalytic mechanism.

Belongs to the SQRD family. As to quaternary structure, monomer. FAD serves as cofactor.

It localises to the membrane. The enzyme catalyses n a quinone + n hydrogen sulfide + n H(+) = polysulfur(n-2) + n a quinol. Its activity is regulated as follows. Inhibited by the quinone analog 2-heptyl-4-hydroxyquinolone N-oxide (HQNO). Inactivated by iodoacetamide treatment. Inhibited by KCN. Catalyzes the oxidation of sulfides, such as hydrogen sulfide, with the help of a quinone. Has the highest activity with caldariella quinone and decylubiquinone, and lower activity with naphtoquinones. Consecutive reaction cycles lead to the accumulation of a polysulfide product on the active site Cys residues; these products are released when they exceed a critical length, typically as cyclooctasulfur. In Acidianus ambivalens (Desulfurolobus ambivalens), this protein is Sulfide-quinone reductase.